A 139-amino-acid polypeptide reads, in one-letter code: MTRFEFFDHTADIGIIAYGRSLEEAFESAALAVFEVMTDTSKIEYKVEVEIEEIGSDLENLLYRWIESLLVYYDSDLLLFGKFKVSIDLNNMTLKGKAYGEKFNPEKHERRTVVKAMTYHEMLISQNDGTYILRFVVDI.

D12, D138, and I139 together coordinate Ca(2+).

This sequence belongs to the archease family.

Its function is as follows. Activates the tRNA-splicing ligase complex by facilitating the enzymatic turnover of catalytic subunit RtcB. Acts by promoting the guanylylation of RtcB, a key intermediate step in tRNA ligation. Can also alter the NTP specificity of RtcB such that ATP, dGTP or ITP is used efficiently. This chain is Protein archease, found in Sulfolobus acidocaldarius (strain ATCC 33909 / DSM 639 / JCM 8929 / NBRC 15157 / NCIMB 11770).